The primary structure comprises 258 residues: Mediator of RNA polymerase II transcription subunit 4 (258 aa).

A coiled-coil region spans residues 52–101 (FRKMLELAEEQAKVEEAMDQLRAKVEVHDREIQKLQKSLKDAELILSTAI). Disordered stretches follow at residues 164–208 (GKSE…EVPN) and 234–258 (LETR…SDSQ). The segment covering 166 to 190 (SEQNINGGTVTHQNSGMPSEQQRTL) has biased composition (polar residues). Gly residues predominate over residues 194–204 (AGSGSGSGAGG). Over residues 246–258 (STDSSSSSSSDSQ) the composition is skewed to low complexity.

Belongs to the Mediator complex subunit 4 family. In terms of assembly, component of the Mediator complex, which includes at least MED4, MED6, MED14, MED17, MED18, MED20, MED21, MED23, MED24, MED27, MED30 and MED31. Interacts with MED10 and MED21.

Its subcellular location is the nucleus. Its function is as follows. Component of the Mediator complex, a coactivator involved in the regulated transcription of nearly all RNA polymerase II-dependent genes. Mediator functions as a bridge to convey information from gene-specific regulatory proteins to the basal RNA polymerase II transcription machinery. Mediator is recruited to promoters by direct interactions with regulatory proteins and serves as a scaffold for the assembly of a functional preinitiation complex with RNA polymerase II and the general transcription factors. Required for activated transcription of the MtnA, MtnB and MtnD genes. This Drosophila melanogaster (Fruit fly) protein is Mediator of RNA polymerase II transcription subunit 4 (MED4).